Here is a 460-residue protein sequence, read N- to C-terminus: MTDLVSLSPKPASAPGTRPAAARKVYVHTFGCQMNASDSDRMIELLGRHAFARAETPDDADLILLNTCAVREKAEQKLLSALGRYREVKARRGALIAVSGCVAQQEKDRLLARVPYVDFVFGPDNIGKLPEMVARAERERFAETGWMDSQDYVFPQADPEAARGRPTAFVTAMKGCDNVCAFCIVPHTRGREVSRAFPEIVAECASLAEVGVREVTLIGQNVNSYAGGCTFAELLRRVAAVPGIARIRFTTSHPHDLSDALVAVFRDEPKVMPHFHLPVQSGSDAVLARMRRDYTVAEYLDRFDRLRAARPGIAITTDFIVGFPGEGEADFEGSLALLERARFEQSFSFLFSPRPKTVANLRLGTAPEWQEIPRAVAVERLERLQAAQRRIAAAALAAELGKVVEVLVEGASDEPGERLGRTPENRVVHLAADEAGAPTGALVRARITRAGGSSLSGTPA.

Residues R23–R138 form the MTTase N-terminal domain. C32, C68, C101, C176, C180, and C183 together coordinate [4Fe-4S] cluster. The Radical SAM core domain occupies A162–A394. In terms of domain architecture, TRAM spans A397 to A460.

This sequence belongs to the methylthiotransferase family. MiaB subfamily. Monomer. It depends on [4Fe-4S] cluster as a cofactor.

Its subcellular location is the cytoplasm. It catalyses the reaction N(6)-dimethylallyladenosine(37) in tRNA + (sulfur carrier)-SH + AH2 + 2 S-adenosyl-L-methionine = 2-methylsulfanyl-N(6)-dimethylallyladenosine(37) in tRNA + (sulfur carrier)-H + 5'-deoxyadenosine + L-methionine + A + S-adenosyl-L-homocysteine + 2 H(+). Its function is as follows. Catalyzes the methylthiolation of N6-(dimethylallyl)adenosine (i(6)A), leading to the formation of 2-methylthio-N6-(dimethylallyl)adenosine (ms(2)i(6)A) at position 37 in tRNAs that read codons beginning with uridine. This Anaeromyxobacter sp. (strain Fw109-5) protein is tRNA-2-methylthio-N(6)-dimethylallyladenosine synthase.